We begin with the raw amino-acid sequence, 519 residues long: Transketolase, chloroplastic (519 aa).

Mg(2+) is bound at residue aspartate 11. Thiamine diphosphate contacts are provided by glycine 12 and asparagine 41. 2 residues coordinate Mg(2+): asparagine 41 and isoleucine 43. Histidine 118 is a binding site for thiamine diphosphate. Residues histidine 118, arginine 212, and serine 239 each contribute to the substrate site. Residues glutamate 266 and phenylalanine 293 each contribute to the thiamine diphosphate site. The Proton donor role is filled by glutamate 266. Substrate contacts are provided by histidine 317, aspartate 325, and arginine 376.

It belongs to the transketolase family. In terms of assembly, homodimer. Requires Mg(2+) as cofactor. Ca(2+) is required as a cofactor. Mn(2+) serves as cofactor. It depends on Co(2+) as a cofactor. The cofactor is thiamine diphosphate. Constitutively expressed in leaves and roots.

It localises to the plastid. It is found in the chloroplast. The catalysed reaction is D-sedoheptulose 7-phosphate + D-glyceraldehyde 3-phosphate = aldehydo-D-ribose 5-phosphate + D-xylulose 5-phosphate. In terms of biological role, catalyzes the transfer of a two-carbon ketol group from a ketose donor to an aldose acceptor, via a covalent intermediate with the cofactor thiamine pyrophosphate. This chain is Transketolase, chloroplastic (TKT3), found in Craterostigma plantagineum (Blue gem).